A 635-amino-acid polypeptide reads, in one-letter code: DNA primase (635 aa).

The CHC2-type zinc-finger motif lies at 41 to 65; it reads CPFHDEKSPSFSVSPAKQMYYCFGC. A Toprim domain is found at 265–348; the sequence is DEAILVEGYF…SGQVNLRILN (84 aa). The Mg(2+) site is built by E271, D317, and D319.

The protein belongs to the DnaG primase family. As to quaternary structure, monomer. Interacts with DnaB. The cofactor is Zn(2+). Mg(2+) serves as cofactor.

The enzyme catalyses ssDNA + n NTP = ssDNA/pppN(pN)n-1 hybrid + (n-1) diphosphate.. In terms of biological role, RNA polymerase that catalyzes the synthesis of short RNA molecules used as primers for DNA polymerase during DNA replication. The chain is DNA primase from Synechocystis sp. (strain ATCC 27184 / PCC 6803 / Kazusa).